Here is a 284-residue protein sequence, read N- to C-terminus: 2,3,4,5-tetrahydropyridine-2,6-dicarboxylate N-succinyltransferase (284 aa).

2 residues coordinate substrate: Arg111 and Asp148.

It belongs to the transferase hexapeptide repeat family. Homotrimer.

It is found in the cytoplasm. It carries out the reaction (S)-2,3,4,5-tetrahydrodipicolinate + succinyl-CoA + H2O = (S)-2-succinylamino-6-oxoheptanedioate + CoA. Its pathway is amino-acid biosynthesis; L-lysine biosynthesis via DAP pathway; LL-2,6-diaminopimelate from (S)-tetrahydrodipicolinate (succinylase route): step 1/3. The polypeptide is 2,3,4,5-tetrahydropyridine-2,6-dicarboxylate N-succinyltransferase (Agrobacterium fabrum (strain C58 / ATCC 33970) (Agrobacterium tumefaciens (strain C58))).